The primary structure comprises 447 residues: Probable glycine dehydrogenase (decarboxylating) subunit 1 (447 aa).

Belongs to the GcvP family. N-terminal subunit subfamily. As to quaternary structure, the glycine cleavage system is composed of four proteins: P, T, L and H. In this organism, the P 'protein' is a heterodimer of two subunits.

The catalysed reaction is N(6)-[(R)-lipoyl]-L-lysyl-[glycine-cleavage complex H protein] + glycine + H(+) = N(6)-[(R)-S(8)-aminomethyldihydrolipoyl]-L-lysyl-[glycine-cleavage complex H protein] + CO2. Functionally, the glycine cleavage system catalyzes the degradation of glycine. The P protein binds the alpha-amino group of glycine through its pyridoxal phosphate cofactor; CO(2) is released and the remaining methylamine moiety is then transferred to the lipoamide cofactor of the H protein. The chain is Probable glycine dehydrogenase (decarboxylating) subunit 1 from Maricaulis maris (strain MCS10) (Caulobacter maris).